Consider the following 452-residue polypeptide: Cobyrinate a,c-diamide synthase (452 aa).

A GATase cobBQ-type domain is found at 248–441 (RVAYALDAAF…LHIHFYQNLL (194 aa)). Cys-330 functions as the Nucleophile in the catalytic mechanism.

This sequence belongs to the CobB/CbiA family. It depends on Mg(2+) as a cofactor.

It catalyses the reaction cob(II)yrinate + 2 L-glutamine + 2 ATP + 2 H2O = cob(II)yrinate a,c diamide + 2 L-glutamate + 2 ADP + 2 phosphate + 2 H(+). Its pathway is cofactor biosynthesis; adenosylcobalamin biosynthesis; cob(II)yrinate a,c-diamide from sirohydrochlorin (anaerobic route): step 10/10. In terms of biological role, catalyzes the ATP-dependent amidation of the two carboxylate groups at positions a and c of cobyrinate, using either L-glutamine or ammonia as the nitrogen source. This Listeria monocytogenes serotype 4b (strain F2365) protein is Cobyrinate a,c-diamide synthase.